A 451-amino-acid polypeptide reads, in one-letter code: Porin AaxA (451 aa).

The first 27 residues, 1–27, serve as a signal peptide directing secretion; that stretch reads MASFHSSLLTALCTLCTYGILTMPAYG.

Belongs to the OprB family.

It is found in the cell outer membrane. Its function is as follows. Facilitates L-arginine uptake, as part of the AaxABC system. The arginine uptake by the bacterium in the macrophage may be a virulence factor against the host innate immune response. The sequence is that of Porin AaxA (aaxA) from Chlamydia caviae (strain ATCC VR-813 / DSM 19441 / 03DC25 / GPIC) (Chlamydophila caviae).